The chain runs to 4377 residues: Ankyrin-3 (4377 aa).

Residues 1 to 44 (MAHAASQLKKNRDLEINAEEEPEKKRKHRKRSRDRKKKSDANAS) form a disordered region. Positions 25 to 38 (KRKHRKRSRDRKKK) are enriched in basic residues. Residue serine 39 is modified to Phosphoserine. 23 ANK repeats span residues 73 to 102 (NGLNALHLASKEGHVEVVSELLQREANVDA), 106 to 135 (KGNTALHIASLAGQAEVVKVLVTNGANVNA), 139 to 168 (NGFTPLYMAAQENHLEVVKFLLDNGASQSL), 172 to 201 (DGFTPLAVALQQGHDQVVSLLLENDTKGKV), 203 to 230 (LPALHIAARKDDTKAAALLLQNDNNADV), 234 to 263 (SGFTPLHIAAHYGNINVATLLLNRAAAVDF), 267 to 296 (NDITPLHVASKRGNANMVKLLLDRGAKIDA), 300 to 329 (DGLTPLHCGARSGHEQVVEMLLDRAAPILS), 333 to 362 (NGLSPLHMATQGDHLNCVQLLLQHNVPVDD), 366 to 395 (DYLTALHVAAHCGHYKVAKVLLDKKANPNA), 399 to 428 (NGFTPLHIACKKNRIKVMELLLKHGASIQA), 432 to 461 (SGLTPIHVAAFMGHVNIVSQLMHHGASPNT), 465 to 494 (RGETALHMAARSGQAEVVRYLVQDGAQVEA), 498 to 527 (DDQTPLHISARLGKADIVQQLLQQGASPNA), 531 to 560 (SGYTPLHLSAREGHEDVAAFLLDHGASLSI), 564 to 593 (KGFTPLHVAAKYGKLEVANLLLQKSASPDA), 597 to 626 (SGLTPLHVAAHYDNQKVALLLLDQGASPHA), 630 to 659 (NGYTPLHIAAKKNQMDIATTLLEYGADANA), 663 to 692 (QGIASVHLAAQEGHVDMVSLLLGRNANVNL), 696 to 725 (SGLTPLHLAAQEDRVNVAEVLVNQGAHVDA), 729 to 758 (MGYTPLHVGCHYGNIKIVNFLLQHSAKVNA), 762 to 791 (NGYTPLHQAAQQGHTHIINVLLQNNASPNE), and 795 to 825 (NGNTALGIARRLGYISVVDTLKIVTEETMTT). A Phosphoserine modification is found at threonine 468. A Phosphoserine modification is found at serine 623. Threonine 765 and glutamate 791 each carry phosphoserine. A phosphoserine mark is found at serine 847, serine 861, serine 867, serine 913, serine 916, serine 922, serine 957, serine 959, and serine 1113. ZU5 domains are found at residues 984 to 1139 (FLVS…VVSR) and 1141 to 1288 (KQES…LADC). Residues 1273-1407 (VSFTTNVSAR…SIKIRDTSQE (135 aa)) are UPA domain. Serine 1445, serine 1459, and serine 1470 each carry phosphoserine. Over residues 1519–1539 (SGFTSLSSSSSNTPSASPLKS) the composition is skewed to low complexity. Residues 1519-1540 (SGFTSLSSSSSNTPSASPLKSI) are disordered. Phosphoserine occurs at positions 1622, 1625, 1632, 1651, 1658, 1984, 2111, 2123, and 2126. 15 disordered regions span residues 1968–1987 (VDNKGSPKSPKSDKGHSPED), 2107–2159 (TILE…VPIP), 2176–2245 (YDPS…EETH), 2299–2322 (AVSPDVHKSAAETSAQHAEKDNQM), 2383–2433 (FPCS…ISDD), 2474–2508 (DVSHSDTEESVTDHAGPPSSELQGSDKRSREKIAT), 2588–2751 (LTEV…VKKI), 2795–2824 (QSNEIVVNDSGSDNVKKQRTEMSSKAMPDS), 3036–3067 (PPLEETETSPTKSPDSLEFSPGKESPSSDVFD), 3131–3272 (TFYT…KKHH), 3298–3516 (PVIR…SVFP), 3538–3607 (KGLD…HEGK), 3635–3718 (GEHT…DPKL), 3868–3897 (KATSPKDTFPPNHMSNTKASKMKQVSQSEK), and 4019–4090 (KKMQ…CERT). Over residues 1977-1986 (PKSDKGHSPE) the composition is skewed to basic and acidic residues. Basic and acidic residues predominate over residues 2115-2136 (FSQHDQDKSPLSDSGFETRSEK). Polar residues predominate over residues 2137 to 2146 (TPSAPQSAES). The segment covering 2299–2308 (AVSPDVHKSA) has biased composition (basic and acidic residues). Over residues 2390–2399 (GQQEEEELTA) the composition is skewed to acidic residues. Positions 2407 to 2417 (LESSRVNTPVS) are enriched in polar residues. Composition is skewed to basic and acidic residues over residues 2497–2508 (GSDKRSREKIAT) and 2588–2612 (LTEVSQFFRDKTEKLNDELQSPEKK). Residues 2622 to 2631 (SSQSPTSSSP) are compositionally biased toward low complexity. The segment covering 2706–2716 (SGFQLKQSKLS) has biased composition (polar residues). Over residues 2720–2742 (LKFEQGTHAKSKDMSQEDRKSDG) the composition is skewed to basic and acidic residues. Residues 2796–2807 (SNEIVVNDSGSD) show a composition bias toward polar residues. Composition is skewed to polar residues over residues 3154-3186 (EQVSFLDSSGKSPLTPETPSSEEVSYEFTSKTP) and 3214-3224 (KSTSLKQTTVE). Basic and acidic residues-rich tracts occupy residues 3227 to 3242 (AVEREMPNDVSKDSNQ) and 3335 to 3361 (KLKEVDDEQKEKPKASAEKASNQKELE). Residues 3377-3402 (SPQNEIAQNGNNDQSITECSIATTAE) are compositionally biased toward polar residues. Residues 3409–3428 (ATEIDSLDGYDLQDEDDGLT) are compositionally biased toward acidic residues. Basic and acidic residues-rich tracts occupy residues 3465–3481 (EVIEEEGKVGPDEDKPP) and 3549–3575 (RGDDEVFDSKSREDETKPFGLAVEDRS). A compositionally biased stretch (low complexity) spans 3576–3598 (PATTPDTTPARTPTDESTPTSEP). Residues 3637-3651 (HTSEGKSGDQGEGDK) are compositionally biased toward basic and acidic residues. Polar residues-rich tracts occupy residues 3654 to 3669 (VTATPQPQSGDTTVET), 3676 to 3713 (ETPTVEPNPSIPTSGECQEGTSSSGSLEKSAAATNTSK), 3880 to 3897 (HMSNTKASKMKQVSQSEK), and 4033 to 4052 (SRNTSLSETSRGGQPSVTTK). A compositionally biased stretch (basic and acidic residues) spans 4053–4076 (SARDKKTEAAPLKSKSEKAGSEKR). The Death domain maps to 4090–4174 (TDIRMAIVAD…DIVTLLEGPI (85 aa)). Serine 4211 and serine 4229 each carry phosphoserine. Disordered regions lie at residues 4251-4298 (NGSH…EPAS) and 4323-4377 (PVSM…KSHS). The span at 4268–4277 (PESQNDVGKQ) shows a compositional bias: polar residues. Phosphoserine is present on residues serine 4290 and serine 4298. The span at 4337 to 4347 (GKPRLSLHEEE) shows a compositional bias: basic and acidic residues. The residue at position 4350 (serine 4350) is a Phosphoserine. Basic residues predominate over residues 4362-4377 (VKTKKEIRHVEKKSHS).

Directly interacts with DMD and betaDAG1. This interaction does not interfere with binding between DMD and betaDAG1. It is also required for DMD and betaDAG1 retention at costameres. Interacts (via N-terminal ANK repeats) with SCHIP1 isoform 5 (via C-terminus); this interaction is required for the localization at axon initial segments (AISs) and nodes of Ranvier (NRs). May be a constituent of a NFASC/NRCAM/ankyrin G complex. Interacts with RHBG. Interacts with PLEC and FLNC. Interacts with KCNA1; this inhibits channel activity. Interacts (via ANK repeats) with IQCJ-SCHIP1; required for IQCJ-SCHIP1 localization at axon initial segments (AIS) and nodes of Ranvier. Interacts with SCHIP1. Interacts with SCN5A. Interacts with PKP2 and GJA1/CX43. Expressed in brain, neurons, muscles and other tissues.

It localises to the cytoplasm. It is found in the cytoskeleton. The protein resides in the cell projection. Its subcellular location is the axon. The protein localises to the cell membrane. It localises to the sarcolemma. It is found in the postsynaptic cell membrane. The protein resides in the lysosome. Its subcellular location is the T-tubule. The protein localises to the golgi apparatus. Membrane-cytoskeleton linker. May participate in the maintenance/targeting of ion channels and cell adhesion molecules at the nodes of Ranvier and axonal initial segments. In skeletal muscle, required for costamere localization of DMD and betaDAG1. Regulates KCNA1 channel activity in function of dietary Mg(2+) levels, and thereby contributes to the regulation of renal Mg(2+) reabsorption. Required for intracellular adhesion and junctional conductance in myocytes, potentially via stabilization of GJA1/CX43 protein abundance and promotion of PKP2, GJA1/CX43, and SCN5A/Nav1.5 localization to cell-cell junctions. Functionally, may be part of a Golgi-specific membrane cytoskeleton in association with beta-spectrin. The sequence is that of Ankyrin-3 from Homo sapiens (Human).